A 137-amino-acid polypeptide reads, in one-letter code: Large ribosomal subunit protein uL16 (137 aa).

The protein belongs to the universal ribosomal protein uL16 family. As to quaternary structure, part of the 50S ribosomal subunit.

In terms of biological role, binds 23S rRNA and is also seen to make contacts with the A and possibly P site tRNAs. This is Large ribosomal subunit protein uL16 from Rhodopseudomonas palustris (strain BisB5).